The primary structure comprises 192 residues: uncharacterized protein (192 aa).

Helical transmembrane passes span 5-22 (VPPL…GIGL), 42-61 (FLFL…HYVY), 66-88 (LRFL…SGKL), 101-118 (WGLL…ALNL), 122-139 (LVMW…STIL), and 159-181 (ALLL…LWLF).

It localises to the cell membrane. This is an uncharacterized protein from Treponema pallidum (strain Nichols).